Consider the following 154-residue polypeptide: MYPGMLSEKRTNALPRGEIARGKSAVSRLFSQGGRLKGGFLLLIYSASRPVEQAPRIPVRVLFTVGKKLVPRAVDRNRIKRLMREAYRLEKNILTRALAFDAGKGDHQVMLAFLYRARADAIPSLERFRAEIRHMLKNLLSNRLPQTREGDRIE.

This sequence belongs to the RnpA family. Consists of a catalytic RNA component (M1 or rnpB) and a protein subunit.

It carries out the reaction Endonucleolytic cleavage of RNA, removing 5'-extranucleotides from tRNA precursor.. RNaseP catalyzes the removal of the 5'-leader sequence from pre-tRNA to produce the mature 5'-terminus. It can also cleave other RNA substrates such as 4.5S RNA. The protein component plays an auxiliary but essential role in vivo by binding to the 5'-leader sequence and broadening the substrate specificity of the ribozyme. The chain is Ribonuclease P protein component from Chlorobaculum tepidum (strain ATCC 49652 / DSM 12025 / NBRC 103806 / TLS) (Chlorobium tepidum).